The chain runs to 310 residues: MLTTDRLVNTLNLELLTGEEGLDRPIKNTDISRPGLEMAGYFSHYASDRIQLLGTTELSFYNLLPDEEKKGRMRKLCRPETPAIIVTRGLEPPEELIQASQETHTPIIVAKDATTSLMSRLTTFLEHELAKTTSLHGVLVDVYGVGVLITGDSGIGKSETALELVKRGHRLVADDNVEIKEITKDELVGKPPKLIEHLLEIRGLGIINVMTLFGAGSILTEKQIRLNINLENWNKNKLYDRVGLNEETLKILDTEITKKTIPVRPGRNVAVIIEVAAMNYRLNIMGINTAVEFNERLNEEIVRNSHKSEE.

Catalysis depends on residues H136 and K157. 151–158 (GDSGIGKS) provides a ligand contact to ATP. S158 provides a ligand contact to Mg(2+). D175 (proton acceptor; for phosphorylation activity. Proton donor; for dephosphorylation activity) is an active-site residue. The segment at 199–208 (LEIRGLGIIN) is important for the catalytic mechanism of both phosphorylation and dephosphorylation. Mg(2+) is bound at residue E200. Residue R241 is part of the active site. The tract at residues 262–267 (PVRPGR) is important for the catalytic mechanism of dephosphorylation.

The protein belongs to the HPrK/P family. Homohexamer. The cofactor is Mg(2+).

It carries out the reaction [HPr protein]-L-serine + ATP = [HPr protein]-O-phospho-L-serine + ADP + H(+). The catalysed reaction is [HPr protein]-O-phospho-L-serine + phosphate + H(+) = [HPr protein]-L-serine + diphosphate. Its function is as follows. Catalyzes the ATP- as well as the pyrophosphate-dependent phosphorylation of a specific serine residue in HPr, a phosphocarrier protein of the phosphoenolpyruvate-dependent sugar phosphotransferase system (PTS). HprK/P also catalyzes the pyrophosphate-producing, inorganic phosphate-dependent dephosphorylation (phosphorolysis) of seryl-phosphorylated HPr (P-Ser-HPr). The two antagonistic activities of HprK/P are regulated by several intracellular metabolites, which change their concentration in response to the absence or presence of rapidly metabolisable carbon sources (glucose, fructose, etc.) in the growth medium. Therefore, by controlling the phosphorylation state of HPr, HPrK/P is a sensor enzyme that plays a major role in the regulation of carbon metabolism and sugar transport: it mediates carbon catabolite repression (CCR), and regulates PTS-catalyzed carbohydrate uptake and inducer exclusion. The sequence is that of HPr kinase/phosphorylase from Staphylococcus epidermidis (strain ATCC 35984 / DSM 28319 / BCRC 17069 / CCUG 31568 / BM 3577 / RP62A).